Here is a 372-residue protein sequence, read N- to C-terminus: UDP-N-acetylglucosamine 2-epimerase (372 aa).

Residues R10, K15, D95, E117, H212, Q270, F275, 289 to 291 (SGG), E295, and R312 contribute to the substrate site.

Belongs to the UDP-N-acetylglucosamine 2-epimerase family.

The enzyme catalyses UDP-N-acetyl-alpha-D-glucosamine = UDP-N-acetyl-alpha-D-mannosamine. It functions in the pathway capsule biogenesis; capsule polysaccharide biosynthesis. Activated by UDP-GlcNAc and inhibited by 2-acetamidoglucal and UDP. Activity is strongly decreased in the presence of Co(2+) and abolished in the presence of Mn(2+) or Zn(2+). Its function is as follows. Catalyzes the interconversion between UDP-N-acetylglucosamine (UDP-GlcNAc) and UDP-N-acetylmannosamine (UDP-ManNAc). Involved in the biosynthesis of the capsular polysaccharides. In vitro, can also use several chemoenzymatically synthesized UDP-ManNAc derivatives as substrates, with lower efficiency. The chain is UDP-N-acetylglucosamine 2-epimerase from Neisseria meningitidis serogroup A / serotype 4A (strain DSM 15465 / Z2491).